Reading from the N-terminus, the 177-residue chain is MTKESLEKATFAGGCFWCMVKPFDTQPGIEKVVSGYTGGHTVNPTYKEVCSGTTGHTEAIEITFDPAIFPYEKLVEVYWQQTDPTDAAGQFVDRGDSYRPVIFCHNDEQKEIAEKSKAALDASGRFKKPIVTEIAKAETFYPAEEYHQDFYKKEKAHYEGYQVASGRAAFIDANWKG.

Cys15 is an active-site residue.

Belongs to the MsrA Met sulfoxide reductase family.

It carries out the reaction L-methionyl-[protein] + [thioredoxin]-disulfide + H2O = L-methionyl-(S)-S-oxide-[protein] + [thioredoxin]-dithiol. The enzyme catalyses [thioredoxin]-disulfide + L-methionine + H2O = L-methionine (S)-S-oxide + [thioredoxin]-dithiol. Its function is as follows. Has an important function as a repair enzyme for proteins that have been inactivated by oxidation. Catalyzes the reversible oxidation-reduction of methionine sulfoxide in proteins to methionine. The chain is Peptide methionine sulfoxide reductase MsrA from Listeria welshimeri serovar 6b (strain ATCC 35897 / DSM 20650 / CCUG 15529 / CIP 8149 / NCTC 11857 / SLCC 5334 / V8).